The chain runs to 166 residues: Small ribosomal subunit protein uS5 (166 aa).

The 64-residue stretch at 11 to 74 (LQEKLIAVNR…EKARRNMINV (64 aa)) folds into the S5 DRBM domain.

It belongs to the universal ribosomal protein uS5 family. As to quaternary structure, part of the 30S ribosomal subunit. Contacts proteins S4 and S8.

In terms of biological role, with S4 and S12 plays an important role in translational accuracy. Located at the back of the 30S subunit body where it stabilizes the conformation of the head with respect to the body. This Haemophilus ducreyi (strain 35000HP / ATCC 700724) protein is Small ribosomal subunit protein uS5.